The chain runs to 161 residues: RNA pyrophosphohydrolase (161 aa).

The 143-residue stretch at 12–154 folds into the Nudix hydrolase domain; sequence PYRPGVGMMI…KRKLYQAVVK (143 aa). The Nudix box signature appears at 46–67; the sequence is GGIVPGETPSIAAMREMLEEIG.

It belongs to the Nudix hydrolase family. RppH subfamily. It depends on a divalent metal cation as a cofactor.

In terms of biological role, accelerates the degradation of transcripts by removing pyrophosphate from the 5'-end of triphosphorylated RNA, leading to a more labile monophosphorylated state that can stimulate subsequent ribonuclease cleavage. This Rickettsia typhi (strain ATCC VR-144 / Wilmington) protein is RNA pyrophosphohydrolase.